Reading from the N-terminus, the 1009-residue chain is C2 domain-containing protein aex-1 (1009 aa).

Residues 812–945 (NAPHVDVHIS…ASEEKPTQRL (134 aa)) enclose the C2 domain.

This sequence belongs to the unc-13 family. In terms of tissue distribution, expressed in intestine, body wall muscles and some amphid neurons.

Involved in retrograde signaling from post-synaptic cells to pre-synaptic neurons, probably by regulating vesicle exocytosis in post-synaptic cells. Acts in muscles, to regulate the localization of synaptic vesicle fusion protein unc-13 likely during vesicle exocytosis and thus regulate retrograde signaling at the neuromuscular junction (NMJ). Regulates anterior body muscle contractions (aBOC) and the expulsion steps during the defecation motor program (DMP). Probably by regulating DMP, plays a homeostatic role in the uptake of triglycerides. Regulates locomotion. In Caenorhabditis elegans, this protein is C2 domain-containing protein aex-1.